A 178-amino-acid chain; its full sequence is Crossover junction endodeoxyribonuclease RuvC (178 aa).

Residues D7, E67, and D139 contribute to the active site. Mg(2+)-binding residues include D7, E67, and D139.

The protein belongs to the RuvC family. Homodimer which binds Holliday junction (HJ) DNA. The HJ becomes 2-fold symmetrical on binding to RuvC with unstacked arms; it has a different conformation from HJ DNA in complex with RuvA. In the full resolvosome a probable DNA-RuvA(4)-RuvB(12)-RuvC(2) complex forms which resolves the HJ. Requires Mg(2+) as cofactor.

It localises to the cytoplasm. It carries out the reaction Endonucleolytic cleavage at a junction such as a reciprocal single-stranded crossover between two homologous DNA duplexes (Holliday junction).. Its function is as follows. The RuvA-RuvB-RuvC complex processes Holliday junction (HJ) DNA during genetic recombination and DNA repair. Endonuclease that resolves HJ intermediates. Cleaves cruciform DNA by making single-stranded nicks across the HJ at symmetrical positions within the homologous arms, yielding a 5'-phosphate and a 3'-hydroxyl group; requires a central core of homology in the junction. The consensus cleavage sequence is 5'-(A/T)TT(C/G)-3'. Cleavage occurs on the 3'-side of the TT dinucleotide at the point of strand exchange. HJ branch migration catalyzed by RuvA-RuvB allows RuvC to scan DNA until it finds its consensus sequence, where it cleaves and resolves the cruciform DNA. In Trichlorobacter lovleyi (strain ATCC BAA-1151 / DSM 17278 / SZ) (Geobacter lovleyi), this protein is Crossover junction endodeoxyribonuclease RuvC.